Reading from the N-terminus, the 197-residue chain is UPF0200 protein MJ1399 (197 aa).

ATP is bound at residue 8–15 (GMPGAGKS).

The protein belongs to the UPF0200 family.

The sequence is that of UPF0200 protein MJ1399 from Methanocaldococcus jannaschii (strain ATCC 43067 / DSM 2661 / JAL-1 / JCM 10045 / NBRC 100440) (Methanococcus jannaschii).